Reading from the N-terminus, the 463-residue chain is L-seryl-tRNA(Sec) selenium transferase (463 aa).

N6-(pyridoxal phosphate)lysine is present on lysine 295.

Belongs to the SelA family. Homodecamer; pentamer of dimers. Binds only one seryl-tRNA(Sec) per dimer. Pyridoxal 5'-phosphate is required as a cofactor.

It is found in the cytoplasm. It carries out the reaction L-seryl-tRNA(Sec) + selenophosphate + H(+) = L-selenocysteinyl-tRNA(Sec) + phosphate. It participates in aminoacyl-tRNA biosynthesis; selenocysteinyl-tRNA(Sec) biosynthesis; selenocysteinyl-tRNA(Sec) from L-seryl-tRNA(Sec) (bacterial route): step 1/1. Its function is as follows. Converts seryl-tRNA(Sec) to selenocysteinyl-tRNA(Sec) required for selenoprotein biosynthesis. In Salmonella paratyphi B (strain ATCC BAA-1250 / SPB7), this protein is L-seryl-tRNA(Sec) selenium transferase.